Here is a 380-residue protein sequence, read N- to C-terminus: Chorismate synthase (380 aa).

NADP(+) is bound at residue arginine 48. Residues 126–128 (HFS), glycine 300, 315–319 (KPISS), and arginine 342 contribute to the FMN site.

The protein belongs to the chorismate synthase family. Homotetramer. It depends on FMNH2 as a cofactor.

The enzyme catalyses 5-O-(1-carboxyvinyl)-3-phosphoshikimate = chorismate + phosphate. The protein operates within metabolic intermediate biosynthesis; chorismate biosynthesis; chorismate from D-erythrose 4-phosphate and phosphoenolpyruvate: step 7/7. Catalyzes the anti-1,4-elimination of the C-3 phosphate and the C-6 proR hydrogen from 5-enolpyruvylshikimate-3-phosphate (EPSP) to yield chorismate, which is the branch point compound that serves as the starting substrate for the three terminal pathways of aromatic amino acid biosynthesis. This reaction introduces a second double bond into the aromatic ring system. This is Chorismate synthase from Lancefieldella parvula (strain ATCC 33793 / DSM 20469 / CCUG 32760 / JCM 10300 / KCTC 3663 / VPI 0546 / 1246) (Atopobium parvulum).